Consider the following 548-residue polypeptide: CTP synthase (548 aa).

An amidoligase domain region spans residues 1 to 266 (MRVNYIFVTG…DNYICKRFNL (266 aa)). Ser-14 is a binding site for CTP. UTP is bound at residue Ser-14. ATP-binding positions include 15–20 (SLGKGI) and Asp-72. Positions 72 and 140 each coordinate Mg(2+). Residues 147-149 (DIE), 187-192 (KTKPTQ), and Lys-223 each bind CTP. Residues 187-192 (KTKPTQ) and Lys-223 each bind UTP. The 253-residue stretch at 291–543 (TVGMVGKYIE…IKAAIEYQHR (253 aa)) folds into the Glutamine amidotransferase type-1 domain. Gly-353 contributes to the L-glutamine binding site. The active-site Nucleophile; for glutamine hydrolysis is Cys-380. L-glutamine is bound by residues 381-384 (LGMQ), Glu-404, and Arg-471. Catalysis depends on residues His-516 and Glu-518.

The protein belongs to the CTP synthase family. In terms of assembly, homotetramer.

The enzyme catalyses UTP + L-glutamine + ATP + H2O = CTP + L-glutamate + ADP + phosphate + 2 H(+). The catalysed reaction is L-glutamine + H2O = L-glutamate + NH4(+). It carries out the reaction UTP + NH4(+) + ATP = CTP + ADP + phosphate + 2 H(+). Its pathway is pyrimidine metabolism; CTP biosynthesis via de novo pathway; CTP from UDP: step 2/2. Its activity is regulated as follows. Allosterically activated by GTP, when glutamine is the substrate; GTP has no effect on the reaction when ammonia is the substrate. The allosteric effector GTP functions by stabilizing the protein conformation that binds the tetrahedral intermediate(s) formed during glutamine hydrolysis. Inhibited by the product CTP, via allosteric rather than competitive inhibition. In terms of biological role, catalyzes the ATP-dependent amination of UTP to CTP with either L-glutamine or ammonia as the source of nitrogen. Regulates intracellular CTP levels through interactions with the four ribonucleotide triphosphates. This is CTP synthase from Blochmanniella pennsylvanica (strain BPEN).